Here is a 352-residue protein sequence, read N- to C-terminus: V-type ATP synthase subunit C (352 aa).

It belongs to the V-ATPase V0D/AC39 subunit family.

Produces ATP from ADP in the presence of a proton gradient across the membrane. The chain is V-type ATP synthase subunit C (atpC) from Deinococcus radiodurans (strain ATCC 13939 / DSM 20539 / JCM 16871 / CCUG 27074 / LMG 4051 / NBRC 15346 / NCIMB 9279 / VKM B-1422 / R1).